Consider the following 222-residue polypeptide: MVDEVEKPVSLEESKTNTREVEEEGEIVGESDDTMSSLGNPSMAMKHALEHSWTFWFDNPSGKSKQAAWGSSIRPIYTFSTVEDFWSVYNNIHHPSKLAVGADFHCFKNKIEPKWEDPVCANGGKWTMSFSRGKSDTCWLYTLLAMIGEQFDCGDEICGAVINVRVRQEKIALWTRNAANETAQVSIGKQWKEFLDYNDSVGFIFHDDAKKLDRAAKNRYSV.

The segment covering Met-1–Glu-20 has biased composition (basic and acidic residues). The interval Met-1–Met-35 is disordered. The segment covering Val-21–Asp-33 has biased composition (acidic residues). EIF4G-binding regions lie at residues His-47 to Glu-50 and Phe-57 to His-93. Residues Lys-65–Gly-70, Lys-97, and Trp-115–Glu-116 each bind mRNA. An intrachain disulfide couples Cys-120 to Cys-158. The interval Tyr-141–Gln-150 is EIF4G-binding. MRNA is bound by residues Arg-165–Lys-170 and Lys-210–Arg-214.

The protein belongs to the eukaryotic initiation factor 4E family. In terms of assembly, EIF4F is a multi-subunit complex, the composition of which varies with external and internal environmental conditions. It is composed of at least EIF4A, EIF4E and EIF4G. EIF4E is also known to interact with other partners. In higher plants two isoforms of EIF4F have been identified, named isoform EIF4F and isoform EIF(iso)4F. Isoform EIF4F has subunits p220 and p26, whereas isoform EIF(iso)4F has subunits p82 and p28. As to quaternary structure, (Microbial infection) Interacts with potyvirus viral genome-linked protein (VPg); this interaction is possible in susceptible hosts but impaired in resistant plants. According to the redox status, the Cys-120-Cys-158 disulfide bridge may have a role in regulating protein function by affecting its ability to bind capped mRNA. As to expression, strongly expressed in susceptible plants but not in resistant ones.

Its subcellular location is the nucleus. It is found in the cytoplasm. Its function is as follows. Component of the protein complex eIF4F, which is involved in the recognition of the mRNA cap, ATP-dependent unwinding of 5'-terminal secondary structure and recruitment of mRNA to the ribosome. Recognizes and binds the 7-methylguanosine-containing mRNA cap during an early step in the initiation of protein synthesis and facilitates ribosome binding by inducing the unwinding of the mRNAs secondary structures. Key component of recessive resistance to potyviruses. In terms of biological role, (Microbial infection) Susceptibility host factor required for viral infection (e.g. potato virus Y (PVY) and pepper mottle virus (PepMoV)) by recruiting viral RNAs to the host ribosomal complex via an interaction with viral genome-linked protein (VPg). This chain is Eukaryotic translation initiation factor 4E-2, found in Nicotiana tabacum (Common tobacco).